The primary structure comprises 1367 residues: Protein patched homolog 3 (1367 aa).

Topologically, residues 1–97 (MSFPDEETDL…WLFRIGCFVQ (97 aa)) are cytoplasmic. Residues 98–118 (RWAWSTIFISLFLYCLCLGGL) traverse the membrane as a helical segment. The Extracellular portion of the chain corresponds to 119 to 625 (RHVTIETDLV…IADMLEEFSQ (507 aa)). Asparagine 235, asparagine 310, asparagine 454, and asparagine 591 each carry an N-linked (GlcNAc...) asparagine glycan. A helical transmembrane segment spans residues 626–646 (FNYIIIVIGYILMVIYAAFTQ). One can recognise an SSD domain in the interval 627-788 (NYIIIVIGYI…MFIFPAMIGI (162 aa)). Residues 647–659 (GRFQGWWLAVQSN) are Cytoplasmic-facing. The chain crosses the membrane as a helical span at residues 660–680 (VALAICGVILVTISSICGLGF). The Extracellular portion of the chain corresponds to 681–694 (ATHLGINFNAATTQ). A helical membrane pass occupies residues 695–715 (VVPFLSLGLGIDDMFLLLHNY). The Cytoplasmic segment spans residues 716-737 (DEIINICNKNEIGVLLKETGMS). A helical transmembrane segment spans residues 738 to 758 (VMLTSINNILAFISGYVLPIP). Residues 759–767 (ALRSFCSQT) are Extracellular-facing. A helical transmembrane segment spans residues 768-788 (AILLAFNLIFLMFIFPAMIGI). Over 789–863 (DLRRQRKGKR…KIYIPALKNN (75 aa)) the chain is Cytoplasmic. A helical transmembrane segment spans residues 864-884 (VVKACVLIGTTTAVVFGLYGM). Residues 885–1143 (YTSTLGLELA…WEQYLTLRWN (259 aa)) lie on the Extracellular side of the membrane. Residues 1144–1164 (LFQAICIIALAVFCVISILMF) traverse the membrane as a helical segment. Residues 1165–1171 (NPWAATL) lie on the Cytoplasmic side of the membrane. Residues 1172–1192 (IMCIVVITTIELGGFMGLMGI) traverse the membrane as a helical segment. At 1193 to 1199 (KMNPISA) the chain is on the extracellular side. Residues 1200 to 1220 (VTLICAVGIGVEFTAHVELAF) traverse the membrane as a helical segment. The Cytoplasmic portion of the chain corresponds to 1221–1237 (LTALGTIDQRLESCLQH). The helical transmembrane segment at 1238 to 1258 (MFVPVYHGAISTFLGVVMLVF) threads the bilayer. The Extracellular segment spans residues 1259–1273 (SEFDFVVTYFFYTMT). The helical transmembrane segment at 1274–1294 (LLVALGVFNGLCVLPVILTLV) threads the bilayer. Over 1295 to 1367 (GPKPELTPTD…SDDESSPAHK (73 aa)) the chain is Cytoplasmic. The segment at 1302–1367 (PTDGSSVLPP…SDDESSPAHK (66 aa)) is disordered. The span at 1346 to 1356 (RDSPSTSSASH) shows a compositional bias: low complexity.

It belongs to the patched family. In males, expressed in the precursor and mature sensory rays, the cloaca, and pre-anal ganglia and cephalic neurons. Also expressed in five cells in the valve region between the seminal vesicle and vas deferens of the somatic gonad.

Its subcellular location is the apical cell membrane. The protein localises to the cell junction. It is found in the adherens junction. In terms of biological role, regulates osmosis during embryonic development. Required for larval development and in particular is involved in larval molting. The protein is Protein patched homolog 3 of Caenorhabditis elegans.